A 224-amino-acid polypeptide reads, in one-letter code: MKSAFTLSLALVAVTATISAAADDNCSFGCLDVYKPVCGSNGETYSNSCYLRLASCKSNNGITEAGDGECASTPASSATPSPVTSSTGSTSGTVGCPDMCLDVYDPVSDENGKEYSNQCYMEMAKCKGTGYDDNKRSGNPGISTLDAERKLAFAPGYQGPPCGDMLCPDNYAPVCGSDGETYPNECDLGITSCNHPEQNITMVGEGPCPSQEQQQQQQQQQQKL.

Residues 1-22 (MKSAFTLSLALVAVTATISAAA) form the signal peptide. Kazal-like domains are found at residues 23–72 (DDNC…ECAS), 90–127 (TSGT…AKCK), and 156–210 (GYQG…PCPS). N25 carries N-linked (GlcNAc...) asparagine glycosylation. 3 disulfide bridges follow: C26–C56, C30–C49, and C38–C70. The tract at residues 69–92 (ECASTPASSATPSPVTSSTGSTSG) is disordered. The segment covering 71–92 (ASTPASSATPSPVTSSTGSTSG) has biased composition (low complexity). 5 cysteine pairs are disulfide-bonded: C96–C126, C100–C119, C162–C193, C167–C186, and C175–C208. N-linked (GlcNAc...) asparagine glycosylation is present at N199. A disordered region spans residues 202 to 224 (MVGEGPCPSQEQQQQQQQQQQKL). Residues 211 to 224 (QEQQQQQQQQQQKL) show a composition bias toward low complexity.

As to quaternary structure, interacts with host subtilisin-like protease P69B.

The protein resides in the secreted. In terms of biological role, secreted effector that interacts with and inhibits the pathogenesis-related P69B subtilisin-like serine protease of host tomato. Inhibition of host proteases by a pathogen extracellular protease inhibitor forms a specific type of defense-counterdefense mechanism between plants and microbial pathogens. This Phytophthora infestans (Potato late blight agent) protein is Extracellular protease inhibitor 10.